Consider the following 79-residue polypeptide: Calcium/calmodulin-dependent protein kinase II inhibitor 2 (79 aa).

Positions 43-69 (KRPPKLGQIGRAKRVVIEDDRIDEVLK) are inhibitory domain.

It belongs to the CAMK2N family.

It localises to the nucleus. It is found in the cytoplasm. The protein resides in the cytosol. In terms of biological role, potent and specific cellular inhibitor of CaM-kinase II (CAMK2). Traps Ca(2+)/calmodulin on CAMK2. This chain is Calcium/calmodulin-dependent protein kinase II inhibitor 2 (camk2n2), found in Xenopus tropicalis (Western clawed frog).